Reading from the N-terminus, the 209-residue chain is Uracil phosphoribosyltransferase (209 aa).

Residues R79, R104, and 131–139 (DPMLATGGS) contribute to the 5-phospho-alpha-D-ribose 1-diphosphate site. Uracil-binding positions include V194 and 199–201 (GDA). 5-phospho-alpha-D-ribose 1-diphosphate is bound at residue D200.

Belongs to the UPRTase family. The cofactor is Mg(2+).

It catalyses the reaction UMP + diphosphate = 5-phospho-alpha-D-ribose 1-diphosphate + uracil. The protein operates within pyrimidine metabolism; UMP biosynthesis via salvage pathway; UMP from uracil: step 1/1. Its activity is regulated as follows. Allosterically activated by GTP. In terms of biological role, catalyzes the conversion of uracil and 5-phospho-alpha-D-ribose 1-diphosphate (PRPP) to UMP and diphosphate. This Bacillus cytotoxicus (strain DSM 22905 / CIP 110041 / 391-98 / NVH 391-98) protein is Uracil phosphoribosyltransferase.